Here is a 556-residue protein sequence, read N- to C-terminus: Protein trichome birefringence-like 1 (556 aa).

A helical; Signal-anchor for type II membrane protein membrane pass occupies residues 38-58 (TFVYAFVVTFVALTVFLAFSP). The short motif at 269–271 (GDS) is the GDS motif element. A DCXHWCLPGXXDXWN motif motif is present at residues 514-528 (DCSHWCLPGVPDSWN).

Belongs to the PC-esterase family. TBL subfamily. Not expressed in trichomes.

The protein localises to the membrane. Can complement TBR and is therefore functionally equivalent, but may work in different tissue. May act as a bridging protein that binds pectin and other cell wall polysaccharides. Probably involved in maintaining esterification of pectins. May be involved in the specific O-acetylation of cell wall polymers. This chain is Protein trichome birefringence-like 1 (TBL1), found in Arabidopsis thaliana (Mouse-ear cress).